The chain runs to 440 residues: Putative postmeiotic segregation increased 2-like protein 1 (440 aa).

The segment covering 164–178 (RVEHNVESSRWEPRR) has biased composition (basic and acidic residues). Residues 164–215 (RVEHNVESSRWEPRRRGACGSRGGNFPSPRGGSGVASLERAESSSTEPAKAI) are disordered. One can recognise a Histidine kinase domain in the interval 230–364 (PVVPSLSTAV…MTVSVKQLFS (135 aa)).

Belongs to the DNA mismatch repair MutL/HexB family. In terms of tissue distribution, highly expressed in kidney, spleen, adrenal gland, ovary and cerebellum and to a lower extent in liver, esophagus, stomach, duodenum, colon, bladder, uterus, lung, pancreas and cerebrum. Not expressed in heart.

This chain is Putative postmeiotic segregation increased 2-like protein 1 (PMS2P1), found in Homo sapiens (Human).